The chain runs to 697 residues: Zinc finger protein 12 (697 aa).

A Glycyl lysine isopeptide (Lys-Gly) (interchain with G-Cter in SUMO2) cross-link involves residue Lys-3. Positions 8-79 (VSFKDVAVDF…EGEFLLQSYP (72 aa)) constitute a KRAB domain. Residues Lys-98, Lys-179, Lys-182, Lys-209, Lys-215, Lys-224, Lys-239, and Lys-267 each participate in a glycyl lysine isopeptide (Lys-Gly) (interchain with G-Cter in SUMO2) cross-link. 2 C2H2-type zinc fingers span residues 269-291 (YECS…QRTH) and 297-319 (YECN…QRTH). Glycyl lysine isopeptide (Lys-Gly) (interchain with G-Cter in SUMO2) cross-links involve residues Lys-309, Lys-323, Lys-337, and Lys-365. 8 C2H2-type zinc fingers span residues 325–347 (YECN…QRTH), 353–375 (YECS…QRTH), 381–403 (YVCH…QKIH), 409–431 (YKCS…LRTH), 437–459 (YECN…YRTH), 465–487 (YECN…QRVH), 493–515 (YECN…HRTH), and 521–543 (YECS…RRIH). Residues Lys-544 and Lys-547 each participate in a glycyl lysine isopeptide (Lys-Gly) (interchain with G-Cter in SUMO2) cross-link. 5 C2H2-type zinc fingers span residues 549–571 (YECY…HRIH), 577–599 (YECS…QRTH), 605–627 (YECY…HRIH), 633–655 (FECN…YRTH), and 661–683 (YECT…QRIH).

This sequence belongs to the krueppel C2H2-type zinc-finger protein family. In terms of tissue distribution, widely expressed in various adult tissues and embryonic developmental stages (isoform 3).

Its subcellular location is the nucleus. In terms of biological role, transcriptional repressor which suppresses activation protein 1 (AP-1)- and serum response element (SRE)-mediated transcriptional activity. The chain is Zinc finger protein 12 (ZNF12) from Homo sapiens (Human).